The sequence spans 430 residues: GTPase Obg (430 aa).

Residues 1-158 (MFVDQVKISL…LDVSLELKLL (158 aa)) enclose the Obg domain. The tract at residues 118–145 (KGGRGGRGNSRFATPRNPAPDFSEKGEP) is disordered. The region spanning 159–329 (ADVGLVGFPS…LLYAIADKLE (171 aa)) is the OBG-type G domain. Residues 165–172 (GFPSVGKS), 190–194 (FTTIK), 212–215 (DLPG), 282–285 (NKMD), and 310–312 (STI) each bind GTP. Residues S172 and T192 each coordinate Mg(2+). The OCT domain maps to 352 to 430 (KHTPSQDKFT…ILGGEFEFVE (79 aa)).

Belongs to the TRAFAC class OBG-HflX-like GTPase superfamily. OBG GTPase family. In terms of assembly, monomer. Requires Mg(2+) as cofactor.

It is found in the cytoplasm. In terms of biological role, an essential GTPase which binds GTP, GDP and possibly (p)ppGpp with moderate affinity, with high nucleotide exchange rates and a fairly low GTP hydrolysis rate. Plays a role in control of the cell cycle, stress response, ribosome biogenesis and in those bacteria that undergo differentiation, in morphogenesis control. The chain is GTPase Obg from Staphylococcus aureus (strain Mu3 / ATCC 700698).